We begin with the raw amino-acid sequence, 523 residues long: Pituitary adenylate cyclase-activating polypeptide type I receptor (523 aa).

The N-terminal stretch at 1–19 (MARVLQLSLTALLLPVAIA) is a signal peptide. Over 20-151 (MHSDCIFKKE…SGDQDYYYLS (132 aa)) the chain is Extracellular. Disulfide bonds link cysteine 33–cysteine 62, cysteine 53–cysteine 117, and cysteine 76–cysteine 133. N-linked (GlcNAc...) asparagine glycosylation is found at asparagine 47, asparagine 59, and asparagine 116. Residues 124–138 (EPFPHYFDACGFDDY) form an important for ADCYAP1/PACAP ligand binding and specificity region. The important for ligand binding and specificity stretch occupies residues 124-138 (EPFPHYFDACGFDDY). Residues 152–176 (VKALYTVGYSTSLATLTTAMVILCR) form a helical membrane-spanning segment. Over 177-186 (FRKLHCTRNF) the chain is Cytoplasmic. A helical transmembrane segment spans residues 187–207 (IHMNLFVSFMLRAISVFIKDW). At 208–222 (ILYAEQDSSHCFVST) the chain is on the extracellular side. The chain crosses the membrane as a helical span at residues 223–248 (VECKAVMVFFHYCVVSNYFWLFIEGL). Cysteine 225 and cysteine 295 are joined by a disulfide. The Cytoplasmic segment spans residues 249 to 266 (YLFTLLVETFFPERRYFY). Residues 267–289 (WYTIIGWGTPTVCVTVWAVLRLY) form a helical membrane-spanning segment. Over 290-301 (FDDAGCWDMNDS) the chain is Extracellular. A helical membrane pass occupies residues 302–328 (TALWWVIKGPVVGSIMVNFVLFIGIII). The Cytoplasmic portion of the chain corresponds to 329–346 (ILVQKLQSPDMGGNESSI). A helical membrane pass occupies residues 347–429 (YLTNLRLRVP…HYTVFAFSPE (83 aa)). Topologically, residues 430–434 (NVSKR) are extracellular. Residues 435 to 458 (ERLVFELGLGSFQGFVVAVLYCFL) form a helical membrane-spanning segment. Over 459–523 (NGEVQAEIKR…SSLPADNLAT (65 aa)) the chain is Cytoplasmic. Phosphoserine is present on residues serine 489 and serine 502.

This sequence belongs to the G-protein coupled receptor 2 family. Interacts with maxadilan, a vasodilator peptide from Lutzomyia longipalpis saliva; the interaction results in ADCYAP1R1 activation. In terms of tissue distribution, hypothalamus, anterior pituitary, adrenal medulla, testicular germ cells.

The protein localises to the cell membrane. Functionally, g protein-coupled receptor activated by the neuropeptide pituitary adenylate cyclase-activating polypeptide (ADCYAP1/PACAP). Binds both PACAP27 and PACAP38 bioactive peptides. Ligand binding causes a conformation change that triggers signaling via guanine nucleotide-binding proteins (G proteins) and modulates the activity of downstream effectors. Activates cAMP-dependent pathway. May regulate the release of adrenocorticotropin, luteinizing hormone, growth hormone, prolactin, epinephrine, and catecholamine. May play a role in spermatogenesis and sperm motility. Causes smooth muscle relaxation and secretion in the gastrointestinal tract. The polypeptide is Pituitary adenylate cyclase-activating polypeptide type I receptor (Rattus norvegicus (Rat)).